Here is a 511-residue protein sequence, read N- to C-terminus: Glutamate/gamma-aminobutyrate antiporter (511 aa).

The Cytoplasmic portion of the chain corresponds to 1–14 (MATLVQTGKAKQLT). Residues 15-35 (LLGFFAITASMVMAVYEYPTF) form a helical membrane-spanning segment. At 36–41 (ATSGFS) the chain is on the periplasmic side. A helical membrane pass occupies residues 42-62 (LVFFLLLGGILWFIPVGLCAA). The Cytoplasmic portion of the chain corresponds to 63 to 93 (EMATVDGWEEGGVFAWVSNTLGPRWGFAAIS). A helical transmembrane segment spans residues 94-114 (FGYLQIAIGFIPMLYFVLGAL). Residues 115–127 (SYILKWPALNEDP) are Periplasmic-facing. A helical transmembrane segment spans residues 128 to 148 (ITKTIAALIILWALALTQFGG). Over 149 to 157 (TKYTARIAK) the chain is Cytoplasmic. Residues 158-178 (VGFFAGILLPAFILIALAAIY) form a helical membrane-spanning segment. The Periplasmic portion of the chain corresponds to 179 to 200 (LHSGAPVAIEMDSKTFFPDFSK). The helical transmembrane segment at 201–221 (VGTLVVFVAFILSYMGVEASA) threads the bilayer. Residues 222–239 (THVNEMSNPGRDYPLAML) lie on the Cytoplasmic side of the membrane. The chain crosses the membrane as a helical span at residues 240–260 (LLMVAAICLSSVGGLSIAMVI). Topologically, residues 261 to 291 (PGNEINLSAGVMQTFTVLMSHVAPEIEWTVR) are periplasmic. A helical transmembrane segment spans residues 292 to 312 (VISALLLLGVLAEIASWIVGP). The Cytoplasmic segment spans residues 313-335 (SRGMYVTAQKNLLPAAFAKMNKN). The chain crosses the membrane as a helical span at residues 336-356 (GVPVTLVISQLVITSIALIIL). Over 357–366 (TNTGGGNNMS) the chain is Periplasmic. A helical membrane pass occupies residues 367-387 (FLIALALTVVIYLCAYFMLFI). At 388-412 (GYIVLVLKHPDLKRTFNIPGGKGVK) the chain is on the cytoplasmic side. A helical transmembrane segment spans residues 413-433 (LVVAIVGLLTSIMAFIVSFLP). Over 434–445 (PDNIQGDSTDMY) the chain is Periplasmic. The helical transmembrane segment at 446–466 (VELLVVSFLVVLALPFILYAV) threads the bilayer. Topologically, residues 467-511 (HDRKGKANTGVTLEPINSQNAPKGHFFLHPRARSPHYIVMNDKKH) are cytoplasmic.

This sequence belongs to the amino acid-polyamine-organocation (APC) superfamily. Glutamate:GABA antiporter (GGA) (TC 2.A.3.7) family.

The protein localises to the cell inner membrane. The enzyme catalyses 4-aminobutanoate(in) + L-glutamate(out) = 4-aminobutanoate(out) + L-glutamate(in). Its activity is regulated as follows. Shows pH-dependent activity. The glutamate analog L-trans-pyrrolidine-2,4-dicarboxylic acid (L-PDC) blocks the uptake of glutamate by selective inhibition. Functionally, involved in glutaminase-dependent acid resistance. Exchanges extracellular glutamate (Glu) for intracellular gamma-aminobutyric acid (GABA) under acidic conditions. The ability to survive the extremely acidic conditions of the stomach is essential for successful colonization of the host by commensal and pathogenic bacteria. The protein is Glutamate/gamma-aminobutyrate antiporter (gadC) of Escherichia coli O157:H7.